A 107-amino-acid polypeptide reads, in one-letter code: NADH-quinone oxidoreductase subunit K (107 aa).

The next 3 helical transmembrane spans lie at 11–31 (LTHY…GVLL), 36–56 (IVLL…FVAF), and 67–87 (IMVF…LALA).

It belongs to the complex I subunit 4L family. In terms of assembly, NDH-1 is composed of 14 different subunits. Subunits NuoA, H, J, K, L, M, N constitute the membrane sector of the complex.

The protein localises to the cell inner membrane. It carries out the reaction a quinone + NADH + 5 H(+)(in) = a quinol + NAD(+) + 4 H(+)(out). NDH-1 shuttles electrons from NADH, via FMN and iron-sulfur (Fe-S) centers, to quinones in the respiratory chain. The immediate electron acceptor for the enzyme in this species is believed to be ubiquinone. Couples the redox reaction to proton translocation (for every two electrons transferred, four hydrogen ions are translocated across the cytoplasmic membrane), and thus conserves the redox energy in a proton gradient. The chain is NADH-quinone oxidoreductase subunit K from Bdellovibrio bacteriovorus (strain ATCC 15356 / DSM 50701 / NCIMB 9529 / HD100).